A 195-amino-acid chain; its full sequence is Large ribosomal subunit protein uL18 (195 aa).

Belongs to the universal ribosomal protein uL18 family. In terms of assembly, part of the 50S ribosomal subunit. Contacts the 5S and 23S rRNAs.

Its function is as follows. This is one of the proteins that bind and probably mediate the attachment of the 5S RNA into the large ribosomal subunit, where it forms part of the central protuberance. This Metallosphaera sedula (strain ATCC 51363 / DSM 5348 / JCM 9185 / NBRC 15509 / TH2) protein is Large ribosomal subunit protein uL18.